Here is a 293-residue protein sequence, read N- to C-terminus: Cell division protein FtsQ (293 aa).

Residues Met1–Arg27 lie on the Cytoplasmic side of the membrane. Residues Leu28–Phe48 traverse the membrane as a helical segment. The Periplasmic segment spans residues Gly49–Gln293. A POTRA domain is found at Phe81–Arg149.

Belongs to the FtsQ/DivIB family. FtsQ subfamily.

It localises to the cell inner membrane. Essential cell division protein. This is Cell division protein FtsQ from Roseobacter litoralis (strain ATCC 49566 / DSM 6996 / JCM 21268 / NBRC 15278 / OCh 149).